We begin with the raw amino-acid sequence, 683 residues long: Protein kinase C eta type (683 aa).

In terms of domain architecture, C2 spans 1-118 (MSSGTMKFNG…LRTAGTSDTF (118 aa)). Serine 28 and serine 32 each carry phosphoserine. Phorbol-ester/DAG-type zinc fingers lie at residues 171–222 (GHKF…VTAC) and 245–295 (PHKF…APNC). A Phosphoserine modification is found at serine 317. The region spanning 355–614 (FEFIRVLGKG…EHEILRHPFF (260 aa)) is the Protein kinase domain. ATP-binding positions include 361-369 (LGKGSFGKV) and lysine 384. Aspartate 479 functions as the Proton acceptor in the catalytic mechanism. Threonine 513 is modified (phosphothreonine; by PDPK1). Residues 615–683 (KEIDWVQLNH…FSYVSPELQP (69 aa)) enclose the AGC-kinase C-terminal domain. Threonine 656 bears the Phosphothreonine mark. At serine 675 the chain carries Phosphoserine.

It belongs to the protein kinase superfamily. AGC Ser/Thr protein kinase family. PKC subfamily. In terms of assembly, interacts with FYN. Interacts with RALA. Interacts with DGKQ.

The protein resides in the cytoplasm. The catalysed reaction is L-seryl-[protein] + ATP = O-phospho-L-seryl-[protein] + ADP + H(+). The enzyme catalyses L-threonyl-[protein] + ATP = O-phospho-L-threonyl-[protein] + ADP + H(+). With respect to regulation, novel PKCs (PRKCD, PRKCE, PRKCH and PRKCQ) are calcium-insensitive, but activated by diacylglycerol (DAG) and phosphatidylserine. Three specific sites; Thr-513 (activation loop of the kinase domain), Thr-656 (turn motif) and Ser-675 (hydrophobic region), need to be phosphorylated for its full activation. Its function is as follows. Calcium-independent, phospholipid- and diacylglycerol (DAG)-dependent serine/threonine-protein kinase that is involved in the regulation of cell differentiation in keratinocytes and pre-B cell receptor, mediates regulation of epithelial tight junction integrity and foam cell formation, and is required for glioblastoma proliferation and apoptosis prevention in MCF-7 cells. In keratinocytes, binds and activates the tyrosine kinase FYN, which in turn blocks epidermal growth factor receptor (EGFR) signaling and leads to keratinocyte growth arrest and differentiation. Associates with the cyclin CCNE1-CDK2-CDKN1B complex and inhibits CDK2 kinase activity, leading to RB1 dephosphorylation and thereby G1 arrest in keratinocytes. In association with RALA activates actin depolymerization, which is necessary for keratinocyte differentiation. In the pre-B cell receptor signaling, functions downstream of BLNK by up-regulating IRF4, which in turn activates L chain gene rearrangement. Regulates epithelial tight junctions (TJs) by phosphorylating occludin (OCLN) on threonine residues, which is necessary for the assembly and maintenance of TJs. In association with PLD2 and via TLR4 signaling, is involved in lipopolysaccharide (LPS)-induced RGS2 down-regulation and foam cell formation. Upon PMA stimulation, mediates glioblastoma cell proliferation by activating the mTOR pathway, the PI3K/AKT pathway and the ERK1-dependent phosphorylation of ELK1. Involved in the protection of glioblastoma cells from irradiation-induced apoptosis by preventing caspase-9 activation. In camptothecin-treated MCF-7 cells, regulates NF-kappa-B upstream signaling by activating IKBKB, and confers protection against DNA damage-induced apoptosis. Promotes oncogenic functions of ATF2 in the nucleus while blocking its apoptotic function at mitochondria. Phosphorylates ATF2 which promotes its nuclear retention and transcriptional activity and negatively regulates its mitochondrial localization. The protein is Protein kinase C eta type (Prkch) of Rattus norvegicus (Rat).